The primary structure comprises 203 residues: Small ribosomal subunit protein uS4 (203 aa).

One can recognise an S4 RNA-binding domain in the interval 93–156 (RRLDNVVYRL…MKVPAILEAV (64 aa)).

The protein belongs to the universal ribosomal protein uS4 family. Part of the 30S ribosomal subunit. Contacts protein S5. The interaction surface between S4 and S5 is involved in control of translational fidelity.

Functionally, one of the primary rRNA binding proteins, it binds directly to 16S rRNA where it nucleates assembly of the body of the 30S subunit. In terms of biological role, with S5 and S12 plays an important role in translational accuracy. The chain is Small ribosomal subunit protein uS4 from Streptococcus agalactiae serotype Ia (strain ATCC 27591 / A909 / CDC SS700).